Consider the following 1024-residue polypeptide: MKFFALFIQRPVATTLLTLAITLSGIIGFSLLPVSPLPQVDYPVIMVSASMPGADPETMASSVATPLERALGRIAGVNEMTSTSSLGSTRIILQFDLNRDINGAARDVQAALNAAQSLLPSGMPSRPTYRKMNPSDAPIMIMTLTSDTFSQGQLYDYASTKLAQKIAQTEGVSDVTVGGSSLPAVRVELNPSALFNQGVSLDAVRQAISAANVRRPQGSVDAAETHWQVQANDEIKTAEGYRPLIVHYNNGSPVRLQDVANVIDSVQDVRNAGMSAGQPAVLLVISREPGANIIATVDRIRAELPALRASIPASIQLNIAQDRSPTIRASLDEVERSLVIAVALVILVVFIFLRSGRATLIPAVAVPVSLIGTFAAMYLCGFSLNNLSLMALTIATGFVVDDAIVVLENISRHLEAGVKPMVAALRGVREVGFTVLSMSISLVAVFIPLLLMAGLPGRLFREFAVTLSVAIGISLVISLTLTPMMCAWLLRSHPKGQQQRIRGFGKVLLAIQQGYGRSLNWALGHTRWVMVVLLSTIALNVWLYISIPKTFFPEQDTGRMMGFIQADQSISFQSMQQKLKDFMQIVGADPAVDSVTGFTGGSRTNSGSMFISLKPLSERQETAQQVITRLRGKLAKEPGANLFLSSVQDIRVGGRHSNAAYQFTLLADDLAALREWEPKVRAALAKLPQLADVNSDQQDKGAEMALTYDRETMARLGIDVSEANALLNNAFGQRQISTIYQPLNQYKVVMEVAPEYTQDVSSLDKMFVINSNGQSIPLSYFAKWQPANAPLAVNHQGLSAASTISFNLPDGGSLSEATAAVERAMTELGVPSTVRGAFAGTAQVFQETLKSQLWLIMAAIATVYIVLGILYESYVHPLTILSTLPSAGVGALLALELFDAPFSLIALIGIMLLIGIVKKNAIMMVDFALDAQRNGNISAREAIFQASLLRFRPIIMTTLAALFGALPLVLSSGDGAELRQPLGITIVGGLVVSQLLTLYTTPVIYLYFDRLRNRFSKQPLMKLE.

Transmembrane regions (helical) follow at residues 12–32 (VATTLLTLAITLSGIIGFSLL), 333–353 (EVERSLVIAVALVILVVFIFL), 360–380 (LIPAVAVPVSLIGTFAAMYLC), 387–407 (LSLMALTIATGFVVDDAIVVL), 435–455 (VLSMSISLVAVFIPLLLMAGL), 469–489 (VAIGISLVISLTLTPMMCAWL), 528–548 (WVMVVLLSTIALNVWLYISIP), 853–873 (LWLIMAAIATVYIVLGILYES), 875–895 (VHPLTILSTLPSAGVGALLAL), 897–917 (LFDAPFSLIALIGIMLLIGIV), 953–973 (PIIMTTLAALFGALPLVLSSG), and 984–1004 (ITIVGGLVVSQLLTLYTTPVI).

Belongs to the resistance-nodulation-cell division (RND) (TC 2.A.6) family. MdtC subfamily. In terms of assembly, part of a tripartite efflux system composed of MdtA, MdtB and MdtC. MdtC forms a heteromultimer with MdtB.

The protein localises to the cell inner membrane. The protein is Multidrug resistance protein MdtC of Yersinia pseudotuberculosis serotype O:1b (strain IP 31758).